The primary structure comprises 149 residues: Large ribosomal subunit protein uL15 (149 aa).

The interval 1-53 (MRLHTLQPAPGAKSTRKRVGRGTSSGHGKTSGFGHKGQKARSGRVGKRGFEGG) is disordered. The span at 23–35 (TSSGHGKTSGFGH) shows a compositional bias: gly residues. A compositionally biased stretch (basic residues) spans 36–47 (KGQKARSGRVGK).

This sequence belongs to the universal ribosomal protein uL15 family. Part of the 50S ribosomal subunit.

Its function is as follows. Binds to the 23S rRNA. In Coprothermobacter proteolyticus (strain ATCC 35245 / DSM 5265 / OCM 4 / BT), this protein is Large ribosomal subunit protein uL15.